Here is a 780-residue protein sequence, read N- to C-terminus: ATP-dependent 6-phosphofructokinase, muscle type (780 aa).

N-acetylthreonine is present on threonine 2. Positions 2–390 are N-terminal catalytic PFK domain 1; it reads THEEHHAAKS…NWEVYKLLAH (389 aa). ATP-binding positions include glycine 25, 88–89, and 118–121; these read RC and GDGS. Aspartate 119 is a binding site for Mg(2+). Substrate contacts are provided by residues 164–166, arginine 201, 208–210, glutamate 264, arginine 292, and 298–301; these read SID, MGR, and HVQR. Catalysis depends on aspartate 166, which acts as the Proton acceptor. Serine 377 carries the phosphoserine modification. The interdomain linker stretch occupies residues 391–401; sequence VRPPVTKSGSY. Positions 402–780 are C-terminal regulatory PFK domain 2; sequence TVAVMNVGAP…TRKRSGEATI (379 aa). Beta-D-fructose 2,6-bisphosphate-binding positions include arginine 471 and 528 to 532; that span reads TVSNN. Serine 530 is a glycosylation site (O-linked (GlcNAc) serine). Lysine 557 carries the post-translational modification N6-(2-hydroxyisobutyryl)lysine. Beta-D-fructose 2,6-bisphosphate is bound by residues arginine 566, 573–575, glutamate 629, arginine 655, and 661–664; these read MGG and HMQQ. A Phosphoserine modification is found at serine 667. A beta-D-fructose 2,6-bisphosphate-binding site is contributed by arginine 735. Phosphoserine is present on serine 775.

The protein belongs to the phosphofructokinase type A (PFKA) family. ATP-dependent PFK group I subfamily. Eukaryotic two domain clade 'E' sub-subfamily. As to quaternary structure, homo- and heterotetramers. Phosphofructokinase (PFK) enzyme functions as a tetramer composed of different combinations of 3 types of subunits, called PFKM (M), PFKL (L) and PFKP (P). The composition of the PFK tetramer differs according to the tissue type it is present in. The kinetic and regulatory properties of the tetrameric enzyme are dependent on the subunit composition, hence can vary across tissues. Interacts (via C-terminus) with HK1 (via N-terminal spermatogenic cell-specific region). Requires Mg(2+) as cofactor. In terms of processing, glcNAcylation decreases enzyme activity.

It is found in the cytoplasm. It catalyses the reaction beta-D-fructose 6-phosphate + ATP = beta-D-fructose 1,6-bisphosphate + ADP + H(+). Its pathway is carbohydrate degradation; glycolysis; D-glyceraldehyde 3-phosphate and glycerone phosphate from D-glucose: step 3/4. Allosterically activated by ADP, AMP, or fructose 2,6-bisphosphate, and allosterically inhibited by ATP or citrate. In terms of biological role, catalyzes the phosphorylation of D-fructose 6-phosphate to fructose 1,6-bisphosphate by ATP, the first committing step of glycolysis. The protein is ATP-dependent 6-phosphofructokinase, muscle type (PFKM) of Sus scrofa (Pig).